Reading from the N-terminus, the 1220-residue chain is DNA-directed RNA polymerase subunit beta' (1220 aa).

C60, C62, C75, and C78 together coordinate Zn(2+). Mg(2+) contacts are provided by D449, D451, and D453. Zn(2+) contacts are provided by C818, C892, C899, and C902.

Belongs to the RNA polymerase beta' chain family. As to quaternary structure, the RNAP catalytic core consists of 2 alpha, 1 beta, 1 beta' and 1 omega subunit. When a sigma factor is associated with the core the holoenzyme is formed, which can initiate transcription. Mg(2+) serves as cofactor. It depends on Zn(2+) as a cofactor.

The enzyme catalyses RNA(n) + a ribonucleoside 5'-triphosphate = RNA(n+1) + diphosphate. Its function is as follows. DNA-dependent RNA polymerase catalyzes the transcription of DNA into RNA using the four ribonucleoside triphosphates as substrates. This is DNA-directed RNA polymerase subunit beta' from Lacticaseibacillus paracasei (strain ATCC 334 / BCRC 17002 / CCUG 31169 / CIP 107868 / KCTC 3260 / NRRL B-441) (Lactobacillus paracasei).